The primary structure comprises 152 residues: Endoribonuclease YbeY (152 aa).

Zn(2+)-binding residues include His-113, His-117, and His-123.

The protein belongs to the endoribonuclease YbeY family. The cofactor is Zn(2+).

It localises to the cytoplasm. Single strand-specific metallo-endoribonuclease involved in late-stage 70S ribosome quality control and in maturation of the 3' terminus of the 16S rRNA. This chain is Endoribonuclease YbeY, found in Janthinobacterium sp. (strain Marseille) (Minibacterium massiliensis).